Here is a 377-residue protein sequence, read N- to C-terminus: Glutamate 5-kinase (377 aa).

ATP is bound at residue Lys-22. Residues Ser-62, Asp-149, and Asn-161 each coordinate substrate. ATP-binding positions include 181–182 and 223–229; these read TD and TGGMVTK. The PUA domain maps to 285–363; it reads RGAIVVDAGA…AQLKRFLGPQ (79 aa).

This sequence belongs to the glutamate 5-kinase family.

It localises to the cytoplasm. It carries out the reaction L-glutamate + ATP = L-glutamyl 5-phosphate + ADP. It participates in amino-acid biosynthesis; L-proline biosynthesis; L-glutamate 5-semialdehyde from L-glutamate: step 1/2. Its function is as follows. Catalyzes the transfer of a phosphate group to glutamate to form L-glutamate 5-phosphate. The protein is Glutamate 5-kinase of Bifidobacterium longum subsp. infantis (strain ATCC 15697 / DSM 20088 / JCM 1222 / NCTC 11817 / S12).